Consider the following 196-residue polypeptide: Pyridoxal 5'-phosphate synthase subunit PdxT (196 aa).

47-49 (GES) contributes to the L-glutamine binding site. The active-site Nucleophile is Cys79. L-glutamine contacts are provided by residues Arg106 and 134 to 135 (IR). Active-site charge relay system residues include His170 and Glu172.

The protein belongs to the glutaminase PdxT/SNO family. In terms of assembly, in the presence of PdxS, forms a dodecamer of heterodimers. Only shows activity in the heterodimer.

It catalyses the reaction aldehydo-D-ribose 5-phosphate + D-glyceraldehyde 3-phosphate + L-glutamine = pyridoxal 5'-phosphate + L-glutamate + phosphate + 3 H2O + H(+). It carries out the reaction L-glutamine + H2O = L-glutamate + NH4(+). It participates in cofactor biosynthesis; pyridoxal 5'-phosphate biosynthesis. In terms of biological role, catalyzes the hydrolysis of glutamine to glutamate and ammonia as part of the biosynthesis of pyridoxal 5'-phosphate. The resulting ammonia molecule is channeled to the active site of PdxS. The polypeptide is Pyridoxal 5'-phosphate synthase subunit PdxT (Bacillus velezensis (strain DSM 23117 / BGSC 10A6 / LMG 26770 / FZB42) (Bacillus amyloliquefaciens subsp. plantarum)).